A 654-amino-acid chain; its full sequence is tRNA 5-methylaminomethyl-2-thiouridine biosynthesis bifunctional protein MnmC (654 aa).

Residues 1-235 form a tRNA (mnm(5)s(2)U34)-methyltransferase region; the sequence is MSDFQHAQLD…KREMLGGTYQ (235 aa). The segment at 261-654 is FAD-dependent cmnm(5)s(2)U34 oxidoreductase; sequence VGGGLAGCAS…LRDLVRGQRG (394 aa).

This sequence in the N-terminal section; belongs to the methyltransferase superfamily. tRNA (mnm(5)s(2)U34)-methyltransferase family. In the C-terminal section; belongs to the DAO family. It depends on FAD as a cofactor.

The protein resides in the cytoplasm. It carries out the reaction 5-aminomethyl-2-thiouridine(34) in tRNA + S-adenosyl-L-methionine = 5-methylaminomethyl-2-thiouridine(34) in tRNA + S-adenosyl-L-homocysteine + H(+). Functionally, catalyzes the last two steps in the biosynthesis of 5-methylaminomethyl-2-thiouridine (mnm(5)s(2)U) at the wobble position (U34) in tRNA. Catalyzes the FAD-dependent demodification of cmnm(5)s(2)U34 to nm(5)s(2)U34, followed by the transfer of a methyl group from S-adenosyl-L-methionine to nm(5)s(2)U34, to form mnm(5)s(2)U34. The sequence is that of tRNA 5-methylaminomethyl-2-thiouridine biosynthesis bifunctional protein MnmC from Pseudomonas paraeruginosa (strain DSM 24068 / PA7) (Pseudomonas aeruginosa (strain PA7)).